The primary structure comprises 640 residues: RecBCD enzyme subunit RecD (640 aa).

194–201 provides a ligand contact to ATP; that stretch reads GGPGTGKT.

It belongs to the RecD family. As to quaternary structure, heterotrimer of RecB, RecC and RecD. All subunits contribute to DNA-binding.

The catalysed reaction is Couples ATP hydrolysis with the unwinding of duplex DNA at the replication fork by translocating in the 5'-3' direction. This creates two antiparallel DNA single strands (ssDNA). The leading ssDNA polymer is the template for DNA polymerase III holoenzyme which synthesizes a continuous strand.. The enzyme catalyses ATP + H2O = ADP + phosphate + H(+). Its function is as follows. A helicase/nuclease that prepares dsDNA breaks (DSB) for recombinational DNA repair. Binds to DSBs and unwinds DNA via a highly rapid and processive ATP-dependent bidirectional helicase activity. Unwinds dsDNA until it encounters a Chi (crossover hotspot instigator) sequence from the 3' direction. Cuts ssDNA a few nucleotides 3' to the Chi site. The properties and activities of the enzyme are changed at Chi. The Chi-altered holoenzyme produces a long 3'-ssDNA overhang and facilitates RecA-binding to the ssDNA for homologous DNA recombination and repair. Holoenzyme degrades any linearized DNA that is unable to undergo homologous recombination. In the holoenzyme this subunit has ssDNA-dependent ATPase and 5'-3' helicase activity. When added to pre-assembled RecBC greatly stimulates nuclease activity and augments holoenzyme processivity. Negatively regulates the RecA-loading ability of RecBCD. This Haemophilus influenzae (strain ATCC 51907 / DSM 11121 / KW20 / Rd) protein is RecBCD enzyme subunit RecD.